Here is a 194-residue protein sequence, read N- to C-terminus: uncharacterized protein (194 aa).

This is an uncharacterized protein from Escherichia coli (strain K12).